The primary structure comprises 103 residues: PTS system oligo-beta-mannoside-specific EIIB component (103 aa).

The PTS EIIB type-3 domain occupies 1-103 (MKKILLACSS…EQALSLMVNQ (103 aa)). The active-site Phosphocysteine intermediate is the C8. A Phosphocysteine; by EIIA modification is found at C8.

The protein localises to the cytoplasm. The enzyme catalyses D-cellobiose(out) + N(pros)-phospho-L-histidyl-[protein] = 6-phospho-beta-D-glucosyl-(1-&gt;4)-D-glucose(in) + L-histidyl-[protein]. In terms of biological role, the phosphoenolpyruvate-dependent sugar phosphotransferase system (sugar PTS), a major carbohydrate active transport system, catalyzes the phosphorylation of incoming sugar substrates concomitantly with their translocation across the cell membrane. The enzyme II GmuABC PTS system is involved in the transport of oligo-glucomannans such as cellobiose or mannobiose. The sequence is that of PTS system oligo-beta-mannoside-specific EIIB component from Bacillus subtilis (strain 168).